Here is a 205-residue protein sequence, read N- to C-terminus: Ribosome maturation factor RimP (205 aa).

It belongs to the RimP family.

The protein resides in the cytoplasm. Required for maturation of 30S ribosomal subunits. This Sinorhizobium fredii (strain NBRC 101917 / NGR234) protein is Ribosome maturation factor RimP.